The sequence spans 316 residues: Porphobilinogen deaminase (316 aa).

C245 is subject to S-(dipyrrolylmethanemethyl)cysteine.

This sequence belongs to the HMBS family. In terms of assembly, monomer. The cofactor is dipyrromethane.

It carries out the reaction 4 porphobilinogen + H2O = hydroxymethylbilane + 4 NH4(+). It functions in the pathway porphyrin-containing compound metabolism; protoporphyrin-IX biosynthesis; coproporphyrinogen-III from 5-aminolevulinate: step 2/4. The protein operates within porphyrin-containing compound metabolism; chlorophyll biosynthesis. Its function is as follows. Tetrapolymerization of the monopyrrole PBG into the hydroxymethylbilane pre-uroporphyrinogen in several discrete steps. This Prochlorococcus marinus (strain AS9601) protein is Porphobilinogen deaminase.